The following is a 447-amino-acid chain: Glycerol-3-phosphate acyltransferase ATS11, chloroplastic (447 aa).

A disordered region spans residues 1-21 (MFILSSSSSLPSPLSLSSSRV). The N-terminal 48 residues, 1 to 48 (MFILSSSSSLPSPLSLSSSRVSLPPPSSSSLNLLPLSPHFQPPNLACS), are a transit peptide targeting the chloroplast. Positions 217–222 (HQTEAD) match the HXXXXD motif motif.

It belongs to the GPAT/DAPAT family.

The protein resides in the plastid. The protein localises to the chloroplast stroma. The enzyme catalyses a fatty acyl-[ACP] + sn-glycerol 3-phosphate = a 1-acyl-sn-glycero-3-phosphate + holo-[ACP]. The catalysed reaction is sn-glycerol 3-phosphate + an acyl-CoA = a 1-acyl-sn-glycero-3-phosphate + CoA. The protein operates within phospholipid metabolism; CDP-diacylglycerol biosynthesis; CDP-diacylglycerol from sn-glycerol 3-phosphate: step 1/3. Functionally, esterifies the acyl-group from acyl-acyl carrier proteins (acyl-ACPs) to the sn-1 position of glycerol-3-phosphate. The physiological acyl donors in chloroplasts are acyl-ACPs, but acyl-CoAs are used as artificial donor for in vitro reactions. The enzyme from chilling-resistant plants discriminates against non-fluid palmitic acid and selects oleic acid whereas the enzyme from sensitive plants accepts both fatty acids. Squash is chilling-sensitive. Preferably utilizes oleoyl groups (18:1-ACP) and has lower affinity to palmitoyl (16:0-ACP) and stearoyl groups (18:0-ACP). The sequence is that of Glycerol-3-phosphate acyltransferase ATS11, chloroplastic from Cucurbita moschata (Winter crookneck squash).